Reading from the N-terminus, the 465-residue chain is Glutamate--tRNA ligase (465 aa).

The short motif at 5-15 (PSPTGMFHVGG) is the 'HIGH' region element. Positions 96, 98, 118, and 120 each coordinate Zn(2+). A 'KMSKS' region motif is present at residues 228 to 232 (KLSKR). K231 contacts ATP.

It belongs to the class-I aminoacyl-tRNA synthetase family. Glutamate--tRNA ligase type 1 subfamily. Monomer. Zn(2+) serves as cofactor.

Its subcellular location is the cytoplasm. It catalyses the reaction tRNA(Glu) + L-glutamate + ATP = L-glutamyl-tRNA(Glu) + AMP + diphosphate. Functionally, catalyzes the attachment of glutamate to tRNA(Glu) in a two-step reaction: glutamate is first activated by ATP to form Glu-AMP and then transferred to the acceptor end of tRNA(Glu). The chain is Glutamate--tRNA ligase from Salinispora tropica (strain ATCC BAA-916 / DSM 44818 / JCM 13857 / NBRC 105044 / CNB-440).